A 338-amino-acid chain; its full sequence is MKNVGFIVTKSEIGGAQTWVNEISNLIKEECNIFLITSEEGWLTHKDVFAGVFVIPGIKKYFDFLTLFKLRKILKENNISTLIASSANAGVYARLVRLLVDFKCIYVSHGWSCLYNGGRLKSIFCIVEKYLSLLTDVIWCVSKSDEKKAIENIGIKEPKIITVSNSVPQMPRCNNKQLQYKVLFVGRLTHPKRPELLANVISKKPQYSLHIVGGGERLESLKKQFSECENIHFLGEVNNFYNYHEYDLFSLISDSEGLPMSGLEAHTAAIPLLLSDVGGCFELIEGNGLLVENTEDDIGYKLDKIFDDYENYREQAIRASGKFVIENYASAYKSIILG.

Belongs to the glycosyltransferase group 1 family. Glycosyltransferase 4 subfamily.

It carries out the reaction N-acetyl-alpha-D-galactosaminyl-di-trans,octa-cis-undecaprenyl diphosphate + UDP-N-acetyl-alpha-D-galactosamine = alpha-D-GalNAc-(1-&gt;3)-alpha-D-GalNAc-di-trans,octa-cis-undecaprenyl diphosphate + UDP + H(+). The protein operates within bacterial outer membrane biogenesis; LPS O-antigen biosynthesis. In terms of biological role, involved in the assembly of the O-repeating unit during O-antigen biosynthesis. The polypeptide is Probable O-antigen biosynthesis glycosyltransferase WbiN (Escherichia coli).